A 332-amino-acid polypeptide reads, in one-letter code: RNA polymerase sigma-B factor (332 aa).

A Polymerase core binding motif is present at residues 125–138 (DLIQEGALGLERGV). The segment at residues 294–313 (LVQISQRMGISRERVRQVEK) is a DNA-binding region (H-T-H motif).

It belongs to the sigma-70 factor family.

Functionally, sigma factors are initiation factors that promote the attachment of RNA polymerase to specific initiation sites and are then released. This Nostoc sp. (strain PCC 7120 / SAG 25.82 / UTEX 2576) protein is RNA polymerase sigma-B factor (sigB).